The sequence spans 161 residues: ATP synthase subunit b 1 (161 aa).

A helical transmembrane segment spans residues 5-25; sequence PETWVAIAFLLLMGVFAYVGV.

Belongs to the ATPase B chain family. In terms of assembly, F-type ATPases have 2 components, F(1) - the catalytic core - and F(0) - the membrane proton channel. F(1) has five subunits: alpha(3), beta(3), gamma(1), delta(1), epsilon(1). F(0) has three main subunits: a(1), b(2) and c(10-14). The alpha and beta chains form an alternating ring which encloses part of the gamma chain. F(1) is attached to F(0) by a central stalk formed by the gamma and epsilon chains, while a peripheral stalk is formed by the delta and b chains.

It localises to the cell inner membrane. In terms of biological role, f(1)F(0) ATP synthase produces ATP from ADP in the presence of a proton or sodium gradient. F-type ATPases consist of two structural domains, F(1) containing the extramembraneous catalytic core and F(0) containing the membrane proton channel, linked together by a central stalk and a peripheral stalk. During catalysis, ATP synthesis in the catalytic domain of F(1) is coupled via a rotary mechanism of the central stalk subunits to proton translocation. Its function is as follows. Component of the F(0) channel, it forms part of the peripheral stalk, linking F(1) to F(0). This chain is ATP synthase subunit b 1, found in Nitrobacter winogradskyi (strain ATCC 25391 / DSM 10237 / CIP 104748 / NCIMB 11846 / Nb-255).